The primary structure comprises 136 residues: Small ribosomal subunit protein uS8c (136 aa).

The protein belongs to the universal ribosomal protein uS8 family. In terms of assembly, part of the 30S ribosomal subunit.

It is found in the plastid. The protein resides in the chloroplast. Functionally, one of the primary rRNA binding proteins, it binds directly to 16S rRNA central domain where it helps coordinate assembly of the platform of the 30S subunit. The chain is Small ribosomal subunit protein uS8c (rps8) from Morus indica (Mulberry).